Here is a 183-residue protein sequence, read N- to C-terminus: Holliday junction branch migration complex subunit RuvA (183 aa).

Residues 1 to 63 (MIVGLIGVVE…EDAHLLYGFL (63 aa)) form a domain I region. Residues 64–141 (EEGEKILFER…IQDETKPMHN (78 aa)) are domain II. Asn141 is a region of interest (flexible linker). Residues 141-183 (NEVFLALESLGFKSAEINKVLKTLKPSLSIEAAIKEALQQLRS) form a domain III region.

The protein belongs to the RuvA family. As to quaternary structure, homotetramer. Forms an RuvA(8)-RuvB(12)-Holliday junction (HJ) complex. HJ DNA is sandwiched between 2 RuvA tetramers; dsDNA enters through RuvA and exits via RuvB. An RuvB hexamer assembles on each DNA strand where it exits the tetramer. Each RuvB hexamer is contacted by two RuvA subunits (via domain III) on 2 adjacent RuvB subunits; this complex drives branch migration. In the full resolvosome a probable DNA-RuvA(4)-RuvB(12)-RuvC(2) complex forms which resolves the HJ.

The protein localises to the cytoplasm. The RuvA-RuvB-RuvC complex processes Holliday junction (HJ) DNA during genetic recombination and DNA repair, while the RuvA-RuvB complex plays an important role in the rescue of blocked DNA replication forks via replication fork reversal (RFR). RuvA specifically binds to HJ cruciform DNA, conferring on it an open structure. The RuvB hexamer acts as an ATP-dependent pump, pulling dsDNA into and through the RuvAB complex. HJ branch migration allows RuvC to scan DNA until it finds its consensus sequence, where it cleaves and resolves the cruciform DNA. The sequence is that of Holliday junction branch migration complex subunit RuvA from Helicobacter pylori (strain G27).